A 216-amino-acid chain; its full sequence is Probable nicotinate-nucleotide adenylyltransferase (216 aa).

The protein belongs to the NadD family.

The catalysed reaction is nicotinate beta-D-ribonucleotide + ATP + H(+) = deamido-NAD(+) + diphosphate. It functions in the pathway cofactor biosynthesis; NAD(+) biosynthesis; deamido-NAD(+) from nicotinate D-ribonucleotide: step 1/1. Functionally, catalyzes the reversible adenylation of nicotinate mononucleotide (NaMN) to nicotinic acid adenine dinucleotide (NaAD). This Geotalea uraniireducens (strain Rf4) (Geobacter uraniireducens) protein is Probable nicotinate-nucleotide adenylyltransferase.